Reading from the N-terminus, the 381-residue chain is Creatine kinase B-type (381 aa).

Serine 4 bears the Phosphoserine mark. A Phosphagen kinase N-terminal domain is found at 11 to 98; the sequence is KLRFPAEDEF…FDPIIEERHG (88 aa). Threonine 35 carries the phosphothreonine modification. Lysine 45 participates in a covalent cross-link: Glycyl lysine isopeptide (Lys-Gly) (interchain with G-Cter in ubiquitin). Valine 72 provides a ligand contact to creatine. A compositionally biased stretch (basic and acidic residues) spans 96-110; sequence RHGGYQPSDEHKTDL. The tract at residues 96–123 is disordered; the sequence is RHGGYQPSDEHKTDLNPDNLQGGDDLDP. Residue lysine 107 forms a Glycyl lysine isopeptide (Lys-Gly) (interchain with G-Cter in ubiquitin) linkage. The residue at position 125 (tyrosine 125) is a Phosphotyrosine. One can recognise a Phosphagen kinase C-terminal domain in the interval 125-367; the sequence is YVLSSRVRTG…KLLIEMEQRL (243 aa). Residues 128 to 132, arginine 130, arginine 132, and histidine 191 contribute to the ATP site; that span reads SSRVR. Positions 130–138 are internal MTS-like signal; that stretch reads RVRTGRSIR. Serine 199 bears the Phosphoserine mark. Glutamate 232 contributes to the creatine binding site. Arginine 236 lines the ATP pocket. 3'-nitrotyrosine is present on tyrosine 269. Serine 285 is a binding site for creatine. Arginine 292 serves as a coordination point for ATP. Serine 309 bears the Phosphoserine mark. ATP is bound by residues arginine 320, 320 to 325, and aspartate 335; that span reads RGTGGV. Threonine 322 is modified (phosphothreonine). Lysine 381 is covalently cross-linked (Glycyl lysine isopeptide (Lys-Gly) (interchain with G-Cter in ubiquitin)).

It belongs to the ATP:guanido phosphotransferase family. Dimer of identical or non-identical chains, which can be either B (brain type) or M (muscle type). With MM being the major form in skeletal muscle and myocardium, MB existing in myocardium, and BB existing in many tissues, especially brain. Interacts with SLC12A6 (via C-terminus); the interaction may be required for SLC12A6 potassium-chloride cotransport activity. In terms of processing, ubiquitinated by the ECS(ASB9) complex, leading to its degradation by the proteasome. In terms of tissue distribution, expressed in hippocampus and corpus callosum (at protein level).

The protein resides in the cytoplasm. It localises to the cytosol. It is found in the mitochondrion. Its subcellular location is the cell membrane. The enzyme catalyses creatine + ATP = N-phosphocreatine + ADP + H(+). Its function is as follows. Reversibly catalyzes the transfer of phosphate between ATP and various phosphogens (e.g. creatine phosphate). Creatine kinase isoenzymes play a central role in energy transduction in tissues with large, fluctuating energy demands, such as skeletal muscle, heart, brain and spermatozoa. Acts as a key regulator of adaptive thermogenesis as part of the futile creatine cycle: localizes to the mitochondria of thermogenic fat cells and acts by mediating phosphorylation of creatine to initiate a futile cycle of creatine phosphorylation and dephosphorylation. During the futile creatine cycle, creatine and N-phosphocreatine are in a futile cycle, which dissipates the high energy charge of N-phosphocreatine as heat without performing any mechanical or chemical work. The chain is Creatine kinase B-type from Mus musculus (Mouse).